A 34-amino-acid polypeptide reads, in one-letter code: Photosystem II reaction center protein M (34 aa).

A helical transmembrane segment spans residues 5–25; that stretch reads ILGLMAVALFILIPTSFLLIL.

The protein belongs to the PsbM family. In terms of assembly, PSII is composed of 1 copy each of membrane proteins PsbA, PsbB, PsbC, PsbD, PsbE, PsbF, PsbH, PsbI, PsbJ, PsbK, PsbL, PsbM, PsbT, PsbX, PsbY, PsbZ, Psb30/Ycf12, at least 3 peripheral proteins of the oxygen-evolving complex and a large number of cofactors. It forms dimeric complexes.

The protein resides in the plastid. Its subcellular location is the chloroplast thylakoid membrane. Functionally, one of the components of the core complex of photosystem II (PSII). PSII is a light-driven water:plastoquinone oxidoreductase that uses light energy to abstract electrons from H(2)O, generating O(2) and a proton gradient subsequently used for ATP formation. It consists of a core antenna complex that captures photons, and an electron transfer chain that converts photonic excitation into a charge separation. This subunit is found at the monomer-monomer interface. This is Photosystem II reaction center protein M from Tupiella akineta (Green alga).